The chain runs to 61 residues: Small ribosomal subunit protein uS14 (61 aa).

Positions 24, 27, 40, and 43 each coordinate Zn(2+).

Belongs to the universal ribosomal protein uS14 family. Zinc-binding uS14 subfamily. Part of the 30S ribosomal subunit. Contacts proteins S3 and S10. Requires Zn(2+) as cofactor.

Binds 16S rRNA, required for the assembly of 30S particles and may also be responsible for determining the conformation of the 16S rRNA at the A site. The chain is Small ribosomal subunit protein uS14 from Mycoplasma capricolum subsp. capricolum (strain California kid / ATCC 27343 / NCTC 10154).